Reading from the N-terminus, the 198-residue chain is Sorcin (198 aa).

4 consecutive EF-hand domains span residues 29 to 64 (GQTQ…SGIA), 70 to 103 (FNLE…AVLN), 100 to 135 (AVLN…MGFR), and 134 to 169 (FRLS…LRAL). Ca(2+) contacts are provided by Asp-83, Asp-85, Ser-87, Thr-89, Glu-94, Asp-113, Asp-115, Ser-117, Thr-119, and Glu-124.

As to quaternary structure, homodimer. Interacts with GCA, RYR2 and ANXA7. Detected in cardiac myocytes.

The protein resides in the cytoplasm. It localises to the sarcoplasmic reticulum membrane. Functionally, calcium-binding protein that modulates excitation-contraction coupling in the heart. Contributes to calcium homeostasis in the heart sarcoplasmic reticulum. Modulates the activity of RYR2 calcium channels. The chain is Sorcin (SRI) from Homo sapiens (Human).